The following is an 840-amino-acid chain: GYAFKPPPRPDFGTSGRTIKLQANFFEMDIPKIDIYHYELDIKPEKCPRRVNREIVEHMVQHFKAQIFGDRKPVFDGRKNLYTAMPLPIGREKVELEVTLPGEGKDRIFKVSIKWVSCVSLQALHDALSGRLPSVPFETIQALDVVMRHLPSMRYTPVGRSFFTASEGCSNPLGGGREVWFGFHQSVRPSLWKMMLNIDVSATAFYKAQPVIEFVCEVLDFKSIEEQQKPLTDSQRVKFTKEIKGLKVEITHCGQMKRKYRVCNVTRRPASHQTFPLQQESGQTVECTVAQYFKDRHKLVLRYPHLPCLQVGQEQKHTYLPLEVCNIVAGQRCIKKLTDNQTSTMIRATARSAPDRQEEISKLMRSASFNTDPYVREFGIMVKDEMTDVTGRVLQPPSILYGGRNKAIATPVQGVWDMRNKQFHTGIEIKVWAIACFAPQRQCTEVHLKSFTEQLRKISRDAGMPIQGQPCFCKYAQGADSVGPMFRHLKNTYAGLQLVVVILPGKTPVYAEVKRVGDTVLGMATQCVQMKNVQRTTPQTLSNLCLKINVKLGGVNNILLPQGRPPVFQQPVIFLGADVTHPPAGDGKKPSIAAVVGSMDAHPNRYCATVRVQQHRQEIIQDLAAMVRELLIQFYKSTRFKPTRIIFYRDGVSEGQFQQVLHHELLAIREACIKLEKDYQPGITFIVVQKRHHTRLFCTDKNERVGKSGNIPAGTTVDTKITHPTEFDFYLCSHAGIQGTSRPSHYHVLWDDNRFSSDELQILTYQLCHTYVRCTRSVSIPAPAYYAHLVAFRARYHLVDKEHDSAEGSHTSGQSNGRDHQALAKAVQVHQDTLRTMYFA.

Residues 210-329 (PVIEFVCEVL…LPLEVCNIVA (120 aa)) form the PAZ domain. Ser-368 is modified (phosphoserine). In terms of domain architecture, Piwi spans 498 to 799 (LVVVILPGKT…VAFRARYHLV (302 aa)). Asp-578 and Asp-650 together coordinate a divalent metal cation. The residue at position 681 (Pro-681) is a 4-hydroxyproline. Position 788 (His-788) interacts with a divalent metal cation. Phosphoserine is present on residues Ser-805, Ser-809, Ser-812, and Ser-815.

Belongs to the argonaute family. Ago subfamily. Interacts with DICER1 through its Piwi domain and with TARBP2 during assembly of the RNA-induced silencing complex (RISC). Together, DICER1, AGO2 and TARBP2 constitute the trimeric RISC loading complex (RLC), or micro-RNA (miRNA) loading complex (miRLC). Within the RLC/miRLC, DICER1 and TARBP2 are required to process precursor miRNAs (pre-miRNAs) to mature miRNAs and then load them onto AGO2. AGO2 bound to the mature miRNA constitutes the minimal RISC and may subsequently dissociate from DICER1 and TARBP2. Note however that the term RISC has also been used to describe the trimeric RLC/miRLC. The formation of RISC complexes containing siRNAs rather than miRNAs appears to occur independently of DICER1. Interacts with AGO1. Also interacts with DDB1, DDX5, DDX6, DDX20, DHX30, DHX36, DDX47, DHX9, ELAVL, FXR1, GEMIN4, HNRNPF, IGF2BP1, ILF3, IMP8, MATR3, PABPC1, PRMT5, P4HA1, P4HB, RBM4, SART3, TNRC6A, TNRC6B, UPF1 and YBX1. Interacts with the P-body components DCP1A and XRN1. Associates with polysomes and messenger ribonucleoproteins (mNRPs). Interacts with RBM4; the interaction is modulated under stress-induced conditions, occurs under both cell proliferation and differentiation conditions and in an RNA- and phosphorylation-independent manner. Interacts with LIMD1, WTIP and AJUBA. Interacts with TRIM71; the interaction increases in presence of RNA. Interacts with APOBEC3G in an RNA-dependent manner. Interacts with APOBEC3A, APOBEC3C, APOBEC3F and APOBEC3H. Interacts with DICER1, TARBP2, EIF6, MOV10 and RPL7A (60S ribosome subunit); they form a large RNA-induced silencing complex (RISC). Interacts with FMR1. Interacts with ZFP36. Interacts with RC3H1; the interaction is RNA independent. Found in a complex composed of AGO2, CHD7 and ARB2A. Interacts with SND1 and SYT11. Interacts with CLNK. Interacts with GARRE1. In terms of processing, hydroxylated. 4-hydroxylation appears to enhance protein stability but is not required for miRNA-binding or endonuclease activity. Ubiquitinated on surface-exposed lysines by a SCF-like E3 ubiquitin-protein ligase complex containing ZSWIM8 during target-directed microRNA degradation (TDMD), a process that mediates degradation of microRNAs (miRNAs). Ubiquitination by the SCF-like E3 ubiquitin-protein ligase complex containing ZSWIM8 leads to its subsequent degradation, thereby exposing miRNAs for degradation. ZSWIM8 recognizes and binds AGO2 when it is engaged with a TDMD target. Post-translationally, phosphorylation at Ser-368 by AKT3; leads to up-regulate translational repression of microRNA target and down-regulate endonucleolytic cleavage. In terms of processing, a phosphorylation cycle of C-terminal serine cluster (Ser-805-Ser-815) regulates the release of target mRNAs. Target-binding leads to phosphorylation of these residues by CSNK1A1, which reduces the affinity of AGO2 for mRNA and enables target release. The ANKRD52-PPP6C phosphatase complex dephosphorylates the residues, which primes AGO2 for binding a new target.

Its subcellular location is the cytoplasm. It is found in the P-body. It localises to the nucleus. The catalysed reaction is Endonucleolytic cleavage to 5'-phosphomonoester.. Functionally, required for RNA-mediated gene silencing (RNAi) by the RNA-induced silencing complex (RISC). The 'minimal RISC' appears to include AGO2 bound to a short guide RNA such as a microRNA (miRNA) or short interfering RNA (siRNA). These guide RNAs direct RISC to complementary mRNAs that are targets for RISC-mediated gene silencing. The precise mechanism of gene silencing depends on the degree of complementarity between the miRNA or siRNA and its target. Binding of RISC to a perfectly complementary mRNA generally results in silencing due to endonucleolytic cleavage of the mRNA specifically by AGO2. Binding of RISC to a partially complementary mRNA results in silencing through inhibition of translation, and this is independent of endonuclease activity. May inhibit translation initiation by binding to the 7-methylguanosine cap, thereby preventing the recruitment of the translation initiation factor eIF4-E. May also inhibit translation initiation via interaction with EIF6, which itself binds to the 60S ribosomal subunit and prevents its association with the 40S ribosomal subunit. The inhibition of translational initiation leads to the accumulation of the affected mRNA in cytoplasmic processing bodies (P-bodies), where mRNA degradation may subsequently occur. In some cases RISC-mediated translational repression is also observed for miRNAs that perfectly match the 3' untranslated region (3'-UTR). Can also up-regulate the translation of specific mRNAs under certain growth conditions. Binds to the AU element of the 3'-UTR of the TNF (TNF-alpha) mRNA and up-regulates translation under conditions of serum starvation. Also required for transcriptional gene silencing (TGS), in which short RNAs known as antigene RNAs or agRNAs direct the transcriptional repression of complementary promoter regions. The protein is Protein argonaute-2 (AGO2) of Oryctolagus cuniculus (Rabbit).